The chain runs to 1080 residues: DNA-directed RNA polymerase subunit beta C-terminal section (1080 aa).

It belongs to the RNA polymerase beta chain family. In terms of assembly, in plastids the minimal PEP RNA polymerase catalytic core is composed of four subunits: alpha, beta, beta', and beta''. When a (nuclear-encoded) sigma factor is associated with the core the holoenzyme is formed, which can initiate transcription.

The protein resides in the plastid. It localises to the chloroplast. The enzyme catalyses RNA(n) + a ribonucleoside 5'-triphosphate = RNA(n+1) + diphosphate. Functionally, DNA-dependent RNA polymerase catalyzes the transcription of DNA into RNA using the four ribonucleoside triphosphates as substrates. This is DNA-directed RNA polymerase subunit beta C-terminal section (rpoB2) from Stigeoclonium helveticum (Green alga).